An 85-amino-acid chain; its full sequence is N.vectensis toxin 6 (85 aa).

The N-terminal stretch at 1–20 (MISFKTVIVCLFLWVVIIGA) is a signal peptide. Disulfide bonds link C46-C82, C48-C71, and C64-C83.

In terms of biological role, probable toxin. This is N.vectensis toxin 6 from Nematostella vectensis (Starlet sea anemone).